A 323-amino-acid chain; its full sequence is rRNA 2'-O-methyltransferase fibrillarin (323 aa).

A disordered region spans residues 1-78; the sequence is MRPGFSPRGG…GGGRGGFGGG (78 aa). Composition is skewed to gly residues over residues 7-44 and 63-78; these read PRGGRGGFGDRGGFGGRGGFGDRGGFRGGSRGGFGGRG and GRGGPRGGGRGGFGGG. 4 positions are modified to asymmetric dimethylarginine: arginine 8, arginine 17, arginine 23, and arginine 29. S-adenosyl-L-methionine is bound by residues 174 to 175, 193 to 194, 218 to 219, and 238 to 241; these read TT, EF, DA, and DVAQ. The interval 276 to 308 is helical; that stretch reads APEAVFAAEVKKMQQENMKPQEQLTLEPYERDH.

It belongs to the methyltransferase superfamily. Fibrillarin family. Component of box C/D small nucleolar ribonucleoprotein (snoRNP) particles. Part of the small subunit (SSU) processome, composed of more than 70 proteins and the RNA chaperone small nucleolar RNA (snoRNA) U3. In terms of processing, by homology to other fibrillarins, some or all of the N-terminal domain arginines are modified to asymmetric dimethylarginine (DMA).

Its subcellular location is the nucleus. It is found in the nucleolus. The protein resides in the nucleoplasm. The enzyme catalyses L-glutaminyl-[histone H2A] + S-adenosyl-L-methionine = N(5)-methyl-L-glutaminyl-[histone H2A] + S-adenosyl-L-homocysteine + H(+). The catalysed reaction is a ribonucleotide in rRNA + S-adenosyl-L-methionine = a 2'-O-methylribonucleotide in rRNA + S-adenosyl-L-homocysteine + H(+). It carries out the reaction a ribonucleotide in U6 snRNA + S-adenosyl-L-methionine = a 2'-O-methylribonucleotide in U6 snRNA + S-adenosyl-L-homocysteine + H(+). Its function is as follows. S-adenosyl-L-methionine-dependent methyltransferase that has the ability to methylate both RNAs and proteins. Involved in pre-rRNA processing by catalyzing the site-specific 2'-hydroxyl methylation of ribose moieties in pre-ribosomal RNA. Probably catalyzes 2'-O-methylation of U6 snRNAs in box C/D RNP complexes. U6 snRNA 2'-O-methylation is required for mRNA splicing fidelity. Also acts as a protein methyltransferase by mediating methylation of 'Gln-105' of histone H2A (H2AQ104me), a modification that impairs binding of the FACT complex and is specifically present at 35S ribosomal DNA locus. Part of the small subunit (SSU) processome, first precursor of the small eukaryotic ribosomal subunit. During the assembly of the SSU processome in the nucleolus, many ribosome biogenesis factors, an RNA chaperone and ribosomal proteins associate with the nascent pre-rRNA and work in concert to generate RNA folding, modifications, rearrangements and cleavage as well as targeted degradation of pre-ribosomal RNA by the RNA exosome. The chain is rRNA 2'-O-methyltransferase fibrillarin (fbl) from Xenopus laevis (African clawed frog).